Reading from the N-terminus, the 727-residue chain is Ubiquitin carboxyl-terminal hydrolase BAP1 (727 aa).

Residues 4–235 (GWLELESDPG…IRFNLMAVVP (232 aa)) form the UCH catalytic domain. Positions 56–60 (RRSRR) match the Arg-finger motif motif. The active-site Nucleophile is the Cys91. His169 serves as the catalytic Proton donor. A disordered region spans residues 273–351 (THKSQESQLP…SLNGVPPTPT (79 aa)). Ser292 is subject to Phosphoserine. Residues 320–330 (CPQTTTHSPPS) are compositionally biased toward polar residues. The HBM-like motif signature appears at 363-366 (NHNY). Ser369 and Ser394 each carry phosphoserine. 2 disordered regions span residues 372-435 (QEEE…DGQL) and 462-522 (SIKT…SPVT). Residues 394-407 (SDDEEDYEDEEEDV) show a composition bias toward acidic residues. Polar residues-rich tracts occupy residues 426–435 (SLSNSSDGQL) and 478–522 (THSQ…SPVT). Thr491 bears the Phosphothreonine mark. Phosphoserine is present on residues Ser519, Ser535, Ser583, and Ser595. Residues 573-622 (LTEGGKGSSPSTRSSQGSQGSSSLEEKEVVEVTDSRDKSGLNRSSEPLSG) form a disordered region. Residues 580-595 (SSPSTRSSQGSQGSSS) show a composition bias toward low complexity. The tract at residues 594–719 (SSLEEKEVVE…QRKPDRRKRS (126 aa)) is interaction with BRCA1. Positions 596-612 (LEEKEVVEVTDSRDKSG) are enriched in basic and acidic residues. Residues 628 to 659 (KELLALLKCVEAEIANYEACLKEEVEKRKKFK) adopt a coiled-coil conformation. The segment at 640-684 (EIANYEACLKEEVEKRKKFKIDDQRRTHNYDEFICTFISMLAQEG) is interaction with YY1. The ULD domain occupies 668 to 696 (NYDEFICTFISMLAQEGMLANLVEQNISV). The tract at residues 697-699 (RRR) is interaction with nucleosomal DNA forming a DNA clamp with ASXL1. Residues 697–720 (RRRQGVSIGRLHKQRKPDRRKRSR) carry the Classical bipartite Nuclear localization signal (NLS) motif. The tract at residues 702–727 (VSIGRLHKQRKPDRRKRSRPYKAKRQ) is disordered. The tract at residues 711-727 (RKPDRRKRSRPYKAKRQ) is positively charged C-terminal extension (CTE). Positions 715 to 720 (RRKRSR) match the Nuclear localization signal motif. Residues 715 to 722 (RRKRSRPY) carry the Non-classical PY-nuclear localization signal (PY-NLS) motif.

It belongs to the peptidase C12 family. BAP1 subfamily. Core component of the polycomb repressive deubiquitinase (PR-DUB) complex, at least composed of BAP1, one of ASXL1, ASXL2 or (probably) ASXL3, and one of MBD5 or MBD6. The PR-DUB core associates with a number of accessory proteins, including FOXK1, FOXK2, KDM1B, HCFC1, YY1 and OGT; KDM1B specifically associates with ASXL2 PR-DUB complexes. The BAP1 deubiquitinase activity is not required for PR-DUB assembly. Homodimerize (via coiled-coil hinge-region between the UCH and ULD domains) to mediate assembly of 2 copies of the BAP1-ASXL heterodimer into a bisymmetric tetramer; dimerization enhances association with nucleosomes. The PR-DUB complex associates with nucleosomes to mediate deubiquitination of 'lys-120' of histone H2AK118ub1 substrates; the association requires the positively charged C-terminal tail of BAP1. Interacts (via ULD domain) with ASXL1 (via DEUBAD domain); the interaction is direct and forms a ubiquitin binding cleft. The interaction with ASXL1 stabilizes BAP1 but is not required for nucleosome binding. Associates (via C-terminus) with nucleosome and chromatosome complexes through direct interaction with DNA and the histone3/4 dimer; this association displaces the histone-2A C-terminal tail, extending and orienting the H2AK118ub1 substrate towards the BAP1 deubiquitinase active site. Also interacts (via arginine finger) directly with the histone H2A-H2B acidic patch; this interaction is not critical for nucleosome-chromatosome association but may play a role in orienting the H2AK118ub1 substrate towards the PR-DUB complex active site. Interacts with BRCA1 (via the RING finger). Interacts (via HBM-like motif) with HCFC1. Interacts (via a C-terminal region overlapping the ULD domain) with YY1; the interaction is direct and requires the interaction with HCFC1. Interacts (when phosphorylated at Thr-491) with FOXK1. Interacts (when phosphorylated at Thr-491) with FOXK2; leading to recruitment of the PR-DUB complex and repression of FOXK2 target genes. Interacts (via non-classical PY-NLS) with TNPO1/transportin-1 (via HEAT repeats 8-12); the interaction is direct, mediates BAP1 nuclear localization and disrupts BAP1 homodimerization. Interacts (via C-terminus) with KPNA1/importin alpha5 and KPNA2/importin alpha1; these interactions can contribute to BAP1 nuclear localization but are less important than the interaction with TNPO1/transportin-1. The interaction with TNPO1/transportin-1 disrupts homodimerization and blocks ubiquitination by UBE2O. Ubiquitinated: monoubiquitinated at multiple sites within its nuclear localization signal (NLS) BY UBE2O, leading to cytoplasmic retention. Able to mediate autodeubiquitination via intramolecular interactions to counteract cytoplasmic retention. Monoubiquitinated on at least 4 sites near or within its PY-NLS.

The protein localises to the cytoplasm. The protein resides in the nucleus. Its subcellular location is the chromosome. The enzyme catalyses Thiol-dependent hydrolysis of ester, thioester, amide, peptide and isopeptide bonds formed by the C-terminal Gly of ubiquitin (a 76-residue protein attached to proteins as an intracellular targeting signal).. Deubiquitinating enzyme that plays a key role in chromatin by mediating deubiquitination of histone H2A and HCFC1. Catalytic component of the polycomb repressive deubiquitinase (PR-DUB) complex, a complex that specifically mediates deubiquitination of histone H2A monoubiquitinated at 'Lys-120' (H2AK119ub1). Does not deubiquitinate monoubiquitinated histone H2B. The PR-DUB complex is an epigenetic regulator of gene expression and acts as a transcriptional coactivator, affecting genes involved in development, cell communication, signaling, cell proliferation and cell viability. Antagonizes PRC1 mediated H2AK119ub1 monoubiquitination. As part of the PR-DUB complex, associates with chromatin enriched in histone marks H3K4me1, H3K4me3, and H3K27Ac, but not in H3K27me3. Acts as a regulator of cell growth by mediating deubiquitination of HCFC1 N-terminal and C-terminal chains, with some specificity toward 'Lys-48'-linked polyubiquitin chains compared to 'Lys-63'-linked polyubiquitin chains. Deubiquitination of HCFC1 does not lead to increase stability of HCFC1. Interferes with the BRCA1 and BARD1 heterodimer activity by inhibiting their ability to mediate ubiquitination and autoubiquitination. It however does not mediate deubiquitination of BRCA1 and BARD1. Able to mediate autodeubiquitination via intramolecular interactions to counteract monoubiquitination at the nuclear localization signal (NLS), thereby protecting it from cytoplasmic sequestration. Acts as a tumor suppressor. Negatively regulates epithelial-mesenchymal transition (EMT) of trophoblast stem cells during placental development by regulating genes involved in epithelial cell integrity, cell adhesion and cytoskeletal organization. The chain is Ubiquitin carboxyl-terminal hydrolase BAP1 (Bap1) from Rattus norvegicus (Rat).